The following is a 283-amino-acid chain: NAD kinase (283 aa).

Aspartate 66 acts as the Proton acceptor in catalysis. NAD(+) is bound by residues 66-67 (DG), arginine 71, 137-138 (ND), histidine 165, aspartate 167, and 178-183 (TGYSMS).

The protein belongs to the NAD kinase family. A divalent metal cation serves as cofactor.

The protein resides in the cytoplasm. It carries out the reaction NAD(+) + ATP = ADP + NADP(+) + H(+). Its function is as follows. Involved in the regulation of the intracellular balance of NAD and NADP, and is a key enzyme in the biosynthesis of NADP. Catalyzes specifically the phosphorylation on 2'-hydroxyl of the adenosine moiety of NAD to yield NADP. The polypeptide is NAD kinase (Agathobacter rectalis (strain ATCC 33656 / DSM 3377 / JCM 17463 / KCTC 5835 / VPI 0990) (Eubacterium rectale)).